Reading from the N-terminus, the 313-residue chain is tRNA dimethylallyltransferase 2 (313 aa).

Residue 16-23 participates in ATP binding; it reads GPTASGKT. 18 to 23 is a binding site for substrate; sequence TASGKT. 2 interaction with substrate tRNA regions span residues 41–44 and 161–165; these read DSRQ and QRTIR.

This sequence belongs to the IPP transferase family. In terms of assembly, monomer. The cofactor is Mg(2+).

The catalysed reaction is adenosine(37) in tRNA + dimethylallyl diphosphate = N(6)-dimethylallyladenosine(37) in tRNA + diphosphate. Functionally, catalyzes the transfer of a dimethylallyl group onto the adenine at position 37 in tRNAs that read codons beginning with uridine, leading to the formation of N6-(dimethylallyl)adenosine (i(6)A). This chain is tRNA dimethylallyltransferase 2, found in Pelobacter propionicus (strain DSM 2379 / NBRC 103807 / OttBd1).